Reading from the N-terminus, the 261-residue chain is MLCANNVSAQIGQKKLLKHINFYVKPNELVVIIGPNGAGKSSLLKALCGDIKINNGDITLNDRLLSDYSIASLATLRAVLTQNYELDFPFSVAEVVDMAHFAHQADYSKQQLMHFSEQVMQALSVTHLKTHTFTQLSGGEKQRVQLARVLCQIQPSLVANKTPYLLIDEPTSSLDIFHQYDVMAQAKSIASQGAGVVAVIHDLSLAASFADRIYMLNNGEVAACGIPKEVLTPALLKRVYNINARLENNTSEAMPHIQMCY.

The ABC transporter domain occupies 2 to 243; sequence LCANNVSAQI…ALLKRVYNIN (242 aa). 34–41 is a binding site for ATP; that stretch reads GPNGAGKS.

The protein belongs to the ABC transporter superfamily. Heme (hemin) importer (TC 3.A.1.14.5) family. As to quaternary structure, the complex is composed of two ATP-binding proteins (HmuV), two transmembrane proteins (HmuU) and a solute-binding protein (HmuT).

Its subcellular location is the cell inner membrane. Part of the ABC transporter complex HmuTUV involved in hemin import. Responsible for energy coupling to the transport system. The sequence is that of Hemin import ATP-binding protein HmuV from Pseudoalteromonas translucida (strain TAC 125).